A 116-amino-acid chain; its full sequence is Protein Rev (116 aa).

Residues Ser-5 and Ser-8 each carry the phosphoserine; by host CK2 modification. Residues 18-26 (LIKILYQSN) are homomultimerization. The tract at residues 26-50 (NPYPKPNGSRQARRNRRRRWRARQN) is disordered. Positions 34–50 (SRQARRNRRRRWRARQN) match the Nuclear localization signal and RNA-binding (RRE) motif. Basic residues predominate over residues 36-47 (QARRNRRRRWRA). Residues 73 to 84 (LQLPPIERLRLD) carry the Nuclear export signal and binding to XPO1 motif. The interval 91 to 116 (NSGTQGVGDPQISGEPCMVLGAGTKE) is disordered. Ser-92 carries the phosphoserine; by host modification.

Belongs to the HIV-1 REV protein family. In terms of assembly, homomultimer; when bound to the RRE. Multimeric assembly is essential for activity and may involve XPO1. Binds to human KPNB1, XPO1, TNPO1, RANBP5 and IPO7. Interacts with the viral Integrase. Interacts with human KHDRBS1. Interacts with human NAP1; this interaction decreases Rev multimerization and stimulates its activity. Interacts with human DEAD-box helicases DDX3 and DDX24; these interactions may serve for viral RNA export to the cytoplasm and packaging, respectively. Interacts with human PSIP1; this interaction may inhibit HIV-1 DNA integration by promoting dissociation of the Integrase-LEDGF/p75 complex. In terms of processing, asymmetrically arginine dimethylated at one site by host PRMT6. Methylation impairs the RNA-binding activity and export of viral RNA from the nucleus to the cytoplasm. Phosphorylated by protein kinase CK2. Presence of, and maybe binding to the N-terminus of the regulatory beta subunit of CK2 is necessary for CK2-mediated Rev's phosphorylation.

It is found in the host nucleus. It localises to the host nucleolus. The protein localises to the host cytoplasm. Functionally, escorts unspliced or incompletely spliced viral pre-mRNAs (late transcripts) out of the nucleus of infected cells. These pre-mRNAs carry a recognition sequence called Rev responsive element (RRE) located in the env gene, that is not present in fully spliced viral mRNAs (early transcripts). This function is essential since most viral proteins are translated from unspliced or partially spliced pre-mRNAs which cannot exit the nucleus by the pathway used by fully processed cellular mRNAs. Rev itself is translated from a fully spliced mRNA that readily exits the nucleus. Rev's nuclear localization signal (NLS) binds directly to KPNB1/Importin beta-1 without previous binding to KPNA1/Importin alpha-1. KPNB1 binds to the GDP bound form of RAN (Ran-GDP) and targets Rev to the nucleus. In the nucleus, the conversion from Ran-GDP to Ran-GTP dissociates Rev from KPNB1 and allows Rev's binding to the RRE in viral pre-mRNAs. Rev multimerization on the RRE via cooperative assembly exposes its nuclear export signal (NES) to the surface. Rev can then form a complex with XPO1/CRM1 and Ran-GTP, leading to nuclear export of the complex. Conversion from Ran-GTP to Ran-GDP mediates dissociation of the Rev/RRE/XPO1/RAN complex, so that Rev can return to the nucleus for a subsequent round of export. Beside KPNB1, also seems to interact with TNPO1/Transportin-1, RANBP5/IPO5 and IPO7/RANBP7 for nuclear import. The nucleoporin-like HRB/RIP is an essential cofactor that probably indirectly interacts with Rev to release HIV RNAs from the perinuclear region to the cytoplasm. This Homo sapiens (Human) protein is Protein Rev.